Here is a 1563-residue protein sequence, read N- to C-terminus: Integrator complex subunit 5-like protein (1563 aa).

2 stretches are compositionally biased toward basic and acidic residues: residues 1-21 (MKEE…RNDN) and 31-44 (EDWR…KNEN). Disordered stretches follow at residues 1-63 (MKEE…YDDD), 102-208 (KKSK…NITY), and 270-310 (NSLN…QQNP). Positions 52-63 (GDSDDDDYYDDD) are enriched in acidic residues. Low complexity-rich tracts occupy residues 109–133 (TAAT…TATA) and 141–202 (NNLL…NNNN). A helical membrane pass occupies residues 350–370 (DSIINWSLSTLTIITRLLIIL). Residues 381 to 398 (QQQQQQQQQQQQQQQQQQ) are compositionally biased toward low complexity. Disordered stretches follow at residues 381–417 (QQQQ…RQPI), 466–498 (SKSS…SSKT), 637–694 (FDNN…DNSS), and 784–828 (ILNN…SQEI). Residues 405–414 (FPPPPPPPLR) show a composition bias toward pro residues. Composition is skewed to low complexity over residues 468–496 (SSSS…SSSS), 639–686 (NNNN…NNNN), and 786–824 (NNNN…QQQQ). A helical membrane pass occupies residues 877 to 897 (IIIKLISLIGMDSIYSSLIIL). 2 disordered regions span residues 1154–1173 (SGNF…DEYG) and 1268–1303 (KQRM…DQNE). A compositionally biased stretch (acidic residues) spans 1160 to 1172 (GDDDDDEYGDDEY). The span at 1277-1288 (SIQQNGNINNEQ) shows a compositional bias: low complexity. The span at 1289–1303 (QQEEDDNDDADDQNE) shows a compositional bias: acidic residues.

The protein belongs to the Integrator subunit 5 family. In terms of assembly, component of the Integrator complex. The core complex associates with protein phosphatase 2A subunits, to form the Integrator-PP2A (INTAC) complex.

The protein resides in the nucleus. It is found in the cytoplasm. It localises to the nucleus membrane. In terms of biological role, component of the integrator complex, a multiprotein complex that terminates RNA polymerase II (Pol II) transcription in the promoter-proximal region of genes. The integrator complex provides a quality checkpoint during transcription elongation by driving premature transcription termination of transcripts that are unfavorably configured for transcriptional elongation: the complex terminates transcription by (1) catalyzing dephosphorylation of the C-terminal domain (CTD) of Pol II subunit polr2a, (2) degrading the exiting nascent RNA transcript via endonuclease activity and (3) promoting the release of Pol II from bound DNA. The integrator complex is also involved in terminating the synthesis of non-coding Pol II transcripts, such as enhancer RNAs (eRNAs), small nuclear RNAs (snRNAs), telomerase RNAs and long non-coding RNAs (lncRNAs). This chain is Integrator complex subunit 5-like protein, found in Dictyostelium discoideum (Social amoeba).